The chain runs to 155 residues: Ribosomal RNA large subunit methyltransferase H (155 aa).

Residues leucine 72, glycine 103, and 122–127 (LSALTL) each bind S-adenosyl-L-methionine.

The protein belongs to the RNA methyltransferase RlmH family. In terms of assembly, homodimer.

Its subcellular location is the cytoplasm. The catalysed reaction is pseudouridine(1915) in 23S rRNA + S-adenosyl-L-methionine = N(3)-methylpseudouridine(1915) in 23S rRNA + S-adenosyl-L-homocysteine + H(+). Specifically methylates the pseudouridine at position 1915 (m3Psi1915) in 23S rRNA. The polypeptide is Ribosomal RNA large subunit methyltransferase H (Salmonella dublin (strain CT_02021853)).